Reading from the N-terminus, the 137-residue chain is Putative pre-16S rRNA nuclease (137 aa).

This sequence belongs to the YqgF nuclease family.

Its subcellular location is the cytoplasm. Its function is as follows. Could be a nuclease involved in processing of the 5'-end of pre-16S rRNA. This chain is Putative pre-16S rRNA nuclease, found in Desulforamulus reducens (strain ATCC BAA-1160 / DSM 100696 / MI-1) (Desulfotomaculum reducens).